The sequence spans 275 residues: Monooxygenase af470 (275 aa).

It carries out the reaction prefumagillin + NADPH + 2 O2 = fumagillin + acetaldehyde + NADP(+) + H2O. It functions in the pathway secondary metabolite biosynthesis; terpenoid biosynthesis. In terms of biological role, monooxygenase; part of the gene cluster that mediates the biosynthesis of fumagillin, a meroterpenoid that has numerous biological activities including irreversible inhibition of human type 2 methionine aminopeptidase (METAP2). Within the pathway, the monooxygenase af470 catalyzes the oxidative cleavage of prefumagillin to yield the final compound of the pathway, fumagillin. The pathway begins with the conversion of farnesyl pyrophosphate (FPP) to beta-trans-bergamotene by the membrane-bound beta-trans-bergamotene synthase af520. The multifunctional cytochrome P450 monooxygenase af510 then converts beta-trans-bergamotene into 5-keto-demethoxyfumagillol via several oxydation steps. 5-keto-demethoxyfumagillol is then subjected to successive C-6 hydroxylation and O-methylation by the dioxygenase af480 and O-methyltransferase af390-400, respectively, to yield 5-keto-fumagillol, which is then stereoselectively reduced by the keto-reductase af490 to 5R-hydroxy-seco-sesquiterpene. The next step is the polyketide transferase af380-catalyzed transfer of a dodecapentaenoyl group synthesized by the polyketide synthase af370 onto 5R-hydroxy-seco-sesquiterpene which leads to the production of prefumagillin. Finally, oxidative cleavage by the monooxygenase af470 converts prefumagillin to fumagillin. In Aspergillus fumigatus (strain ATCC MYA-4609 / CBS 101355 / FGSC A1100 / Af293) (Neosartorya fumigata), this protein is Monooxygenase af470.